The following is a 107-amino-acid chain: Phosphoribosyl-ATP pyrophosphatase (107 aa).

Belongs to the PRA-PH family.

The protein resides in the cytoplasm. The enzyme catalyses 1-(5-phospho-beta-D-ribosyl)-ATP + H2O = 1-(5-phospho-beta-D-ribosyl)-5'-AMP + diphosphate + H(+). Its pathway is amino-acid biosynthesis; L-histidine biosynthesis; L-histidine from 5-phospho-alpha-D-ribose 1-diphosphate: step 2/9. The sequence is that of Phosphoribosyl-ATP pyrophosphatase from Novosphingobium aromaticivorans (strain ATCC 700278 / DSM 12444 / CCUG 56034 / CIP 105152 / NBRC 16084 / F199).